A 79-amino-acid polypeptide reads, in one-letter code: Toxin ICK-20 (79 aa).

An N-terminal signal peptide occupies residues 1–20 (MMKYFLVLCLVVLGVAAVQA). Cystine bridges form between Cys-43/Cys-57, Cys-50/Cys-61, Cys-56/Cys-78, and Cys-68/Cys-74. N-linked (GlcNAc...) asparagine glycosylation is present at Asn-71.

The protein belongs to the neurotoxin 13 (insecticidal toxin ABC) family. ICK-21 subfamily. As to expression, expressed by the venom gland.

It is found in the secreted. Ion channel inhibitor. The sequence is that of Toxin ICK-20 from Trittame loki (Brush-footed trapdoor spider).